The following is a 236-amino-acid chain: tRNA1(Val) (adenine(37)-N6)-methyltransferase (236 aa).

The protein belongs to the methyltransferase superfamily. tRNA (adenine-N(6)-)-methyltransferase family.

The protein localises to the cytoplasm. The catalysed reaction is adenosine(37) in tRNA1(Val) + S-adenosyl-L-methionine = N(6)-methyladenosine(37) in tRNA1(Val) + S-adenosyl-L-homocysteine + H(+). In terms of biological role, specifically methylates the adenine in position 37 of tRNA(1)(Val) (anticodon cmo5UAC). In Shewanella sp. (strain MR-7), this protein is tRNA1(Val) (adenine(37)-N6)-methyltransferase.